Consider the following 152-residue polypeptide: UPF0179 protein HQ_3004A (152 aa).

This sequence belongs to the UPF0179 family.

The polypeptide is UPF0179 protein HQ_3004A (Haloquadratum walsbyi (strain DSM 16790 / HBSQ001)).